The primary structure comprises 316 residues: MTEGMHSNVKEAIKILKELGLPKGQQNERSALCLLSLMNITQDKTWSEAESPLIGITPMMEFCRINYGKEYAPNSRETFRRFTMHQFVDAGIALYNPDKPTRPVNSPKAVYQIEAETLELIKCYNTEEWSELLARYLSNRQTLVERYAKERQQNKIPVQIAEGKEIYITPGEHSELIKAIIEEFAPRYVPGGRLIYAGDTGEKMGYFDEELLRQLGVVIDSHGKMPDVVIYFPEKKWLLLIESVTSHGPVDHKRHEELAKLFNGSTAGIVYVTAFPNRSLMARYLNNISWETEVWVADAPSHLIHFNGVRFLGPYE.

This sequence belongs to the BsuBI/PstI type II restriction endonuclease family. In terms of assembly, homodimer. Requires Mg(2+) as cofactor.

It carries out the reaction Endonucleolytic cleavage of DNA to give specific double-stranded fragments with terminal 5'-phosphates.. Functionally, a P subtype restriction enzyme that recognizes the double-stranded sequence 5'-CTGCAG-3' and cleaves after A-5. The polypeptide is Type II restriction enzyme BsuBI (hsdBR) (Bacillus subtilis).